Consider the following 131-residue polypeptide: Small ribosomal subunit protein uS8 (131 aa).

The protein belongs to the universal ribosomal protein uS8 family. As to quaternary structure, part of the 30S ribosomal subunit. Contacts proteins S5 and S12.

One of the primary rRNA binding proteins, it binds directly to 16S rRNA central domain where it helps coordinate assembly of the platform of the 30S subunit. This Wolbachia pipientis subsp. Culex pipiens (strain wPip) protein is Small ribosomal subunit protein uS8.